Here is a 164-residue protein sequence, read N- to C-terminus: NADH-quinone oxidoreductase subunit I (164 aa).

4Fe-4S ferredoxin-type domains follow at residues 55 to 85 (LRRYPNGEERCIACKLCEAICPAQAITIDAE) and 95 to 124 (TRYDIDMTKCIYCGFCQEACPVDAIVEGPN). Residues Cys-65, Cys-68, Cys-71, Cys-75, Cys-104, Cys-107, Cys-110, and Cys-114 each coordinate [4Fe-4S] cluster.

It belongs to the complex I 23 kDa subunit family. As to quaternary structure, NDH-1 is composed of 14 different subunits. Subunits NuoA, H, J, K, L, M, N constitute the membrane sector of the complex. Requires [4Fe-4S] cluster as cofactor.

Its subcellular location is the cell inner membrane. The catalysed reaction is a quinone + NADH + 5 H(+)(in) = a quinol + NAD(+) + 4 H(+)(out). NDH-1 shuttles electrons from NADH, via FMN and iron-sulfur (Fe-S) centers, to quinones in the respiratory chain. The immediate electron acceptor for the enzyme in this species is believed to be ubiquinone. Couples the redox reaction to proton translocation (for every two electrons transferred, four hydrogen ions are translocated across the cytoplasmic membrane), and thus conserves the redox energy in a proton gradient. The sequence is that of NADH-quinone oxidoreductase subunit I from Dinoroseobacter shibae (strain DSM 16493 / NCIMB 14021 / DFL 12).